Here is a 794-residue protein sequence, read N- to C-terminus: Phosphoribosylformylglycinamidine synthase subunit PurL (794 aa).

The active site involves histidine 47. ATP contacts are provided by tyrosine 50 and lysine 89. Residue glutamate 91 participates in Mg(2+) binding. Substrate-binding positions include 92–95 and arginine 114; that span reads SHNH. The active-site Proton acceptor is the histidine 93. Mg(2+) is bound at residue aspartate 115. Glutamine 238 provides a ligand contact to substrate. Aspartate 266 provides a ligand contact to Mg(2+). Substrate is bound at residue 310–312; the sequence is ESQ. The ATP site is built by aspartate 522 and glycine 559. Asparagine 560 contacts Mg(2+). Residue serine 562 participates in substrate binding.

This sequence belongs to the FGAMS family. In terms of assembly, monomer. Part of the FGAM synthase complex composed of 1 PurL, 1 PurQ and 2 PurS subunits.

Its subcellular location is the cytoplasm. The catalysed reaction is N(2)-formyl-N(1)-(5-phospho-beta-D-ribosyl)glycinamide + L-glutamine + ATP + H2O = 2-formamido-N(1)-(5-O-phospho-beta-D-ribosyl)acetamidine + L-glutamate + ADP + phosphate + H(+). It functions in the pathway purine metabolism; IMP biosynthesis via de novo pathway; 5-amino-1-(5-phospho-D-ribosyl)imidazole from N(2)-formyl-N(1)-(5-phospho-D-ribosyl)glycinamide: step 1/2. Its function is as follows. Part of the phosphoribosylformylglycinamidine synthase complex involved in the purines biosynthetic pathway. Catalyzes the ATP-dependent conversion of formylglycinamide ribonucleotide (FGAR) and glutamine to yield formylglycinamidine ribonucleotide (FGAM) and glutamate. The FGAM synthase complex is composed of three subunits. PurQ produces an ammonia molecule by converting glutamine to glutamate. PurL transfers the ammonia molecule to FGAR to form FGAM in an ATP-dependent manner. PurS interacts with PurQ and PurL and is thought to assist in the transfer of the ammonia molecule from PurQ to PurL. This chain is Phosphoribosylformylglycinamidine synthase subunit PurL, found in Prochlorococcus marinus (strain MIT 9313).